We begin with the raw amino-acid sequence, 497 residues long: Glycerol kinase 2 (497 aa).

An ADP-binding site is contributed by threonine 13. Threonine 13, threonine 14, and serine 15 together coordinate ATP. Residue threonine 13 coordinates sn-glycerol 3-phosphate. Residue arginine 17 participates in ADP binding. Sn-glycerol 3-phosphate-binding residues include arginine 83, glutamate 84, tyrosine 134, and aspartate 241. Residues arginine 83, glutamate 84, tyrosine 134, aspartate 241, and glutamine 242 each coordinate glycerol. Positions 263 and 305 each coordinate ADP. Residues threonine 263, glycine 305, glutamine 309, and glycine 406 each contribute to the ATP site. Residues glycine 406 and asparagine 410 each coordinate ADP.

This sequence belongs to the FGGY kinase family.

The enzyme catalyses glycerol + ATP = sn-glycerol 3-phosphate + ADP + H(+). The protein operates within polyol metabolism; glycerol degradation via glycerol kinase pathway; sn-glycerol 3-phosphate from glycerol: step 1/1. Key enzyme in the regulation of glycerol uptake and metabolism. Catalyzes the phosphorylation of glycerol to yield sn-glycerol 3-phosphate. The sequence is that of Glycerol kinase 2 from Sulfolobus acidocaldarius (strain ATCC 33909 / DSM 639 / JCM 8929 / NBRC 15157 / NCIMB 11770).